Reading from the N-terminus, the 446-residue chain is Chromosomal replication initiator protein DnaA (446 aa).

Residues 1-81 form a domain I, interacts with DnaA modulators region; it reads MENISDLWNS…AKLAIRFIIP (81 aa). The tract at residues 81–109 is domain II; that stretch reads PQSQAEEDIDLPPVKRNPAQDDSAHLPQS. Positions 110–326 are domain III, AAA+ region; it reads MLNPKYTFDT…GALIRVVAYS (217 aa). ATP-binding residues include G154, G156, K157, and T158. Positions 327-446 are domain IV, binds dsDNA; sequence SLINKDINAD…QVEEINGILK (120 aa).

This sequence belongs to the DnaA family. In terms of assembly, oligomerizes as a right-handed, spiral filament on DNA at oriC.

It localises to the cytoplasm. Functionally, plays an essential role in the initiation and regulation of chromosomal replication. ATP-DnaA binds to the origin of replication (oriC) to initiate formation of the DNA replication initiation complex once per cell cycle. Binds the DnaA box (a 9 base pair repeat at the origin) and separates the double-stranded (ds)DNA. Forms a right-handed helical filament on oriC DNA; dsDNA binds to the exterior of the filament while single-stranded (ss)DNA is stabiized in the filament's interior. The ATP-DnaA-oriC complex binds and stabilizes one strand of the AT-rich DNA unwinding element (DUE), permitting loading of DNA polymerase. After initiation quickly degrades to an ADP-DnaA complex that is not apt for DNA replication. Binds acidic phospholipids. In Bacillus cereus (strain G9842), this protein is Chromosomal replication initiator protein DnaA.